Here is a 681-residue protein sequence, read N- to C-terminus: Macrolide export ATP-binding/permease protein MacB (681 aa).

An ABC transporter domain is found at 6–244 (LKLAAVTRRF…FAEVGVGAAA (239 aa)). Residue 42–49 (GASGSGKS) participates in ATP binding. A disordered region spans residues 246–274 (TETAADTRSAPASGDAPPPANNDTAADPA). 4 consecutive transmembrane segments (helical) span residues 306 to 326 (LLTM…VAVG), 554 to 574 (LTLL…IGVM), 611 to 631 (LVCL…GALF), and 644 to 664 (AGAI…FGFM).

It belongs to the ABC transporter superfamily. Macrolide exporter (TC 3.A.1.122) family. Homodimer.

The protein localises to the cell inner membrane. In terms of biological role, non-canonical ABC transporter that contains transmembrane domains (TMD), which form a pore in the inner membrane, and an ATP-binding domain (NBD), which is responsible for energy generation. Confers resistance against macrolides. The polypeptide is Macrolide export ATP-binding/permease protein MacB (Burkholderia cenocepacia (strain HI2424)).